Consider the following 289-residue polypeptide: Glucose and ribitol dehydrogenase homolog 2 (289 aa).

The segment at 1–32 (MASGFPPQKQETQPGIQHVMEPTPEFSSSNYK) is disordered. Position 43–67 (43–67 (LVTGGDSGIGKAVCHCYALEGASVA)) interacts with NAD(+). Ser-180 serves as a coordination point for substrate. Tyr-193 (proton acceptor) is an active-site residue.

Belongs to the short-chain dehydrogenases/reductases (SDR) family.

In terms of biological role, may act as a short alcohol-polyol-sugar dehydrogenase possibly related to carbohydrate metabolism and the acquisition of desiccation tolerance. May also be involved in signal transduction. The polypeptide is Glucose and ribitol dehydrogenase homolog 2 (Arabidopsis thaliana (Mouse-ear cress)).